A 149-amino-acid polypeptide reads, in one-letter code: Pleckstrin homology domain-containing family J member 1 (149 aa).

Positions 15-108 (PAEMAAELGM…WMAALRQASY (94 aa)) constitute a PH domain.

This chain is Pleckstrin homology domain-containing family J member 1 (PLEKHJ1), found in Bos taurus (Bovine).